The chain runs to 425 residues: UPF0229 protein ETA_15540 (425 aa).

The tract at residues 60 to 111 (NEPSFHQGRGGERYRVHPGNDHFVQNDRVDRPQGGGAGGSGQGNAGKDGEGQ) is disordered. Over residues 68–90 (RGGERYRVHPGNDHFVQNDRVDR) the composition is skewed to basic and acidic residues. The span at 92–105 (QGGGAGGSGQGNAG) shows a compositional bias: gly residues.

The protein belongs to the UPF0229 family.

This is UPF0229 protein ETA_15540 from Erwinia tasmaniensis (strain DSM 17950 / CFBP 7177 / CIP 109463 / NCPPB 4357 / Et1/99).